Reading from the N-terminus, the 446-residue chain is Tryptophan synthase beta chain 2 (446 aa).

Residue K110 is modified to N6-(pyridoxal phosphate)lysine.

It belongs to the TrpB family. In terms of assembly, tetramer of two alpha and two beta chains. The cofactor is pyridoxal 5'-phosphate.

The catalysed reaction is (1S,2R)-1-C-(indol-3-yl)glycerol 3-phosphate + L-serine = D-glyceraldehyde 3-phosphate + L-tryptophan + H2O. It participates in amino-acid biosynthesis; L-tryptophan biosynthesis; L-tryptophan from chorismate: step 5/5. Its function is as follows. The beta subunit is responsible for the synthesis of L-tryptophan from indole and L-serine. This chain is Tryptophan synthase beta chain 2 (trpB2), found in Pyrococcus furiosus (strain ATCC 43587 / DSM 3638 / JCM 8422 / Vc1).